A 566-amino-acid polypeptide reads, in one-letter code: Arginine--tRNA ligase (566 aa).

The 'HIGH' region signature appears at 120 to 130 (PNIAKPFHVGH).

Belongs to the class-I aminoacyl-tRNA synthetase family. As to quaternary structure, monomer.

It is found in the cytoplasm. It catalyses the reaction tRNA(Arg) + L-arginine + ATP = L-arginyl-tRNA(Arg) + AMP + diphosphate. The sequence is that of Arginine--tRNA ligase from Clostridium kluyveri (strain NBRC 12016).